The following is a 177-amino-acid chain: Nucleoside triphosphate/diphosphate phosphatase (177 aa).

Catalysis depends on arginine 23, which acts as the Proton donor. Asparagine 87, aspartate 103, aspartate 105, aspartate 107, aspartate 120, and glutamate 123 together coordinate Mg(2+).

Belongs to the Ntdp family. Mg(2+) is required as a cofactor.

The catalysed reaction is a ribonucleoside 5'-triphosphate + H2O = a ribonucleoside 5'-diphosphate + phosphate + H(+). It catalyses the reaction a ribonucleoside 5'-diphosphate + H2O = a ribonucleoside 5'-phosphate + phosphate + H(+). In terms of biological role, has nucleoside phosphatase activity towards nucleoside triphosphates and nucleoside diphosphates. The polypeptide is Nucleoside triphosphate/diphosphate phosphatase (Streptococcus equi subsp. zooepidemicus (strain MGCS10565)).